The following is a 442-amino-acid chain: Tol-Pal system protein TolB (442 aa).

A signal peptide spans 1-26 (MRHRSCFSLFAGLALVFCLAVGTAAA).

It belongs to the TolB family. As to quaternary structure, the Tol-Pal system is composed of five core proteins: the inner membrane proteins TolA, TolQ and TolR, the periplasmic protein TolB and the outer membrane protein Pal. They form a network linking the inner and outer membranes and the peptidoglycan layer.

It localises to the periplasm. Functionally, part of the Tol-Pal system, which plays a role in outer membrane invagination during cell division and is important for maintaining outer membrane integrity. The sequence is that of Tol-Pal system protein TolB from Nitratidesulfovibrio vulgaris (strain ATCC 29579 / DSM 644 / CCUG 34227 / NCIMB 8303 / VKM B-1760 / Hildenborough) (Desulfovibrio vulgaris).